A 494-amino-acid chain; its full sequence is MNASALFKKIRVKNVIGTLDIQVDDITTDSRTAKEGSLFVASKGYTVDSHKFCQNVVDQGCGIVVVNRELELKGNVTQVVVPDTLRVASLLAHELYEFPSHQLTTYGVTGTNGKTSIATMIHLIYRKLNKNSAYLGTNGFQVNETKTKGANTTPETVALTKKIKEAVDANAEAMTMEVSSHGLALGRLRGVEFDVAIFSNLTQDHLDFHGTMEAYGHAKSLLFSQLGEDLSKEKYVVLNNDDDFSDYLASVTPYEVFTYGITHEAQFMAKNIKESLQGVEFEFCTPFGSFPVKSPYVGRFNISNIMAAMIAVWSKGTNLNEIINAVTELEPVEGRLEVLDPSLPIDLIIDYAHTADGMNKLIDAVQPFVKQKLIFLVGMAGERDLTKTPEMGRVACRADYVIFTPDNPANDDPKMLTAELAKGATHNNYIEFDDRAEGIRHAIDIAEPGDTVVLASKGREPYQIMPGHVKVPHRDDLIGLKAAYQKFGGGPLED.

UDP-N-acetyl-alpha-D-muramoyl-L-alanyl-D-glutamate is bound at residue Ser-30. 110–116 provides a ligand contact to ATP; that stretch reads GTNGKTS. UDP-N-acetyl-alpha-D-muramoyl-L-alanyl-D-glutamate is bound by residues 152-153, Ser-179, and Arg-187; that span reads TT. Lys-219 is modified (N6-carboxylysine). Positions 406–409 match the L-lysine recognition motif motif; it reads DNPA.

The protein belongs to the MurCDEF family. MurE subfamily. Carboxylation is probably crucial for Mg(2+) binding and, consequently, for the gamma-phosphate positioning of ATP.

Its subcellular location is the cytoplasm. It carries out the reaction UDP-N-acetyl-alpha-D-muramoyl-L-alanyl-D-glutamate + L-lysine + ATP = UDP-N-acetyl-alpha-D-muramoyl-L-alanyl-gamma-D-glutamyl-L-lysine + ADP + phosphate + H(+). It functions in the pathway cell wall biogenesis; peptidoglycan biosynthesis. Its function is as follows. Catalyzes the addition of L-lysine to the nucleotide precursor UDP-N-acetylmuramoyl-L-alanyl-D-glutamate (UMAG) in the biosynthesis of bacterial cell-wall peptidoglycan. The polypeptide is UDP-N-acetylmuramoyl-L-alanyl-D-glutamate--L-lysine ligase (Staphylococcus epidermidis (strain ATCC 35984 / DSM 28319 / BCRC 17069 / CCUG 31568 / BM 3577 / RP62A)).